Here is a 543-residue protein sequence, read N- to C-terminus: Chaperonin GroEL (543 aa).

ATP contacts are provided by residues 29–32, 86–90, glycine 413, and aspartate 504; these read TVGP and DGTTT.

This sequence belongs to the chaperonin (HSP60) family. As to quaternary structure, forms a cylinder of 14 subunits composed of two heptameric rings stacked back-to-back. Interacts with the co-chaperonin GroES.

The protein resides in the cytoplasm. It catalyses the reaction ATP + H2O + a folded polypeptide = ADP + phosphate + an unfolded polypeptide.. Together with its co-chaperonin GroES, plays an essential role in assisting protein folding. The GroEL-GroES system forms a nano-cage that allows encapsulation of the non-native substrate proteins and provides a physical environment optimized to promote and accelerate protein folding. This Mycoplasma pneumoniae (strain ATCC 29342 / M129 / Subtype 1) (Mycoplasmoides pneumoniae) protein is Chaperonin GroEL.